Here is a 592-residue protein sequence, read N- to C-terminus: Peroxisomal targeting signal receptor (592 aa).

Cys-10 participates in a covalent cross-link: Glycyl cysteine thioester (Cys-Gly) (interchain with G-Cter in ubiquitin). The interval 11-33 is amphipathic helix 1 (AH1); sequence SVNGNAVAQFNKHTQQDRSLQQQ. Lys-22 participates in a covalent cross-link: Glycyl lysine isopeptide (Lys-Gly) (interchain with G-Cter in ubiquitin). Over residues 22–46 the composition is skewed to polar residues; sequence KHTQQDRSLQQQVANQHGNVAQNQG. The tract at residues 22–49 is disordered; the sequence is KHTQQDRSLQQQVANQHGNVAQNQGFKK. The amphipathic helix 2 (AH2) stretch occupies residues 58–76; the sequence is RANLDQFMNNGAPQNSFQF. 3 short sequence motifs (wxxxF/Y motif) span residues 100-104, 128-132, and 185-189; these read WSQDF, WASEF, and WENQF. The interval 223–239 is amphipathic helix 4 (AH4); the sequence is FQEVWDSLNSESFENDF. Positions 262 to 266 match the WxxxF/Y motif 4 motif; the sequence is WEKDF. TPR repeat units follow at residues 295 to 329, 330 to 363, 440 to 473, 475 to 507, and 509 to 541; these read DQDP…DENH, VDAW…HPEN, ADVQ…RPDD, ILWN…KPTF, and RARY…HQVE.

This sequence belongs to the peroxisomal targeting signal receptor family. As to quaternary structure, interacts (via WxxxF/Y and LVxEF motifs) with PEX14; promoting translocation through the PEX13-PEX14 docking complex. Monoubiquitinated at Cys-10 by PEX2 during PEX5 passage through the retrotranslocation channel: monoubiquitination acts as a signal for PEX5 extraction and is required for proper export from peroxisomes and recycling. When PEX5 recycling is compromised, polyubiquitinated at Lys-22 by PEX10 during its passage through the retrotranslocation channel, leading to its degradation.

Its subcellular location is the cytoplasm. It is found in the cytosol. It localises to the peroxisome matrix. In terms of biological role, receptor that mediates peroxisomal import of proteins containing a C-terminal PTS1-type tripeptide peroxisomal targeting signal (SKL-type). Binds to cargo proteins containing a PTS1 peroxisomal targeting signal in the cytosol, and translocates them into the peroxisome matrix by passing through the PEX13-PEX14 docking complex along with cargo proteins. PEX5 receptor is then retrotranslocated into the cytosol, leading to release of bound cargo in the peroxisome matrix, and reset for a subsequent peroxisome import cycle. This Candida albicans (strain SC5314 / ATCC MYA-2876) (Yeast) protein is Peroxisomal targeting signal receptor (PEX5).